The sequence spans 253 residues: 4-phosphopantoate--beta-alanine ligase (253 aa).

ATP is bound by residues Arg17, Arg39, 179 to 181 (DLN), 185 to 186 (RT), and 197 to 198 (NL).

This sequence belongs to the archaeal phosphopantothenate synthetase family. As to quaternary structure, homodimer.

The catalysed reaction is (R)-4-phosphopantoate + beta-alanine + ATP = (R)-4'-phosphopantothenate + AMP + diphosphate + H(+). It functions in the pathway cofactor biosynthesis; coenzyme A biosynthesis. Its function is as follows. Catalyzes the condensation of (R)-4-phosphopantoate and beta-alanine to 4'-phosphopantothenate in the CoA biosynthesis pathway. The sequence is that of 4-phosphopantoate--beta-alanine ligase from Methanosarcina mazei (strain ATCC BAA-159 / DSM 3647 / Goe1 / Go1 / JCM 11833 / OCM 88) (Methanosarcina frisia).